An 89-amino-acid chain; its full sequence is Small ribosomal subunit protein bS20 (89 aa).

Basic residues predominate over residues 1 to 12; the sequence is MANIKSAKKRVK. The interval 1-20 is disordered; sequence MANIKSAKKRVKQTVVRNER.

Belongs to the bacterial ribosomal protein bS20 family.

In terms of biological role, binds directly to 16S ribosomal RNA. The protein is Small ribosomal subunit protein bS20 of Xylella fastidiosa (strain 9a5c).